The sequence spans 318 residues: Mitochondrial thiamine pyrophosphate carrier (318 aa).

Solcar repeat units follow at residues 13–106 (ISNV…LTEL), 116–202 (RDFS…LKRA), and 214–309 (NGNF…FCNF). Residues 19–39 (AVAGSVSGLVTRVLISPLDVI) form a helical membrane-spanning segment. Ser51 bears the Phosphoserine mark. 4 consecutive transmembrane segments (helical) span residues 87–107 (LLSIGYGAVQFLSFEALTELV), 122–142 (FLCGGLSACVATLAVHPVDVL), 173–193 (VFYKGLNPTLIAIFPYAGFQF), and 220–240 (LLCGSGAGVISKTLTYPLDLF). The Substrate recognition signature appears at 241 to 246 (KKRLQV). Residues 293–313 (ALSTGLVFFWYELFCNFFHHM) traverse the membrane as a helical segment.

Belongs to the mitochondrial carrier (TC 2.A.29) family.

The protein localises to the mitochondrion membrane. It carries out the reaction thiamine phosphate(out) + thiamine diphosphate(in) = thiamine phosphate(in) + thiamine diphosphate(out). Its function is as follows. Mitochondrial transporter mediating uptake of thiamine diphosphate into mitochondria. It is not clear if the antiporter activity is affected by the membrane potential or by the proton electrochemical gradient. This chain is Mitochondrial thiamine pyrophosphate carrier (SLC25A19), found in Bos taurus (Bovine).